Here is a 420-residue protein sequence, read N- to C-terminus: Glutamate dehydrogenase (420 aa).

Lys-105 is an active-site residue. 220 to 226 (GYGNAGY) is a binding site for NAD(+).

This sequence belongs to the Glu/Leu/Phe/Val dehydrogenases family. As to quaternary structure, homohexamer.

It localises to the cytoplasm. The catalysed reaction is L-glutamate + NAD(+) + H2O = 2-oxoglutarate + NH4(+) + NADH + H(+). It catalyses the reaction L-glutamate + NADP(+) + H2O = 2-oxoglutarate + NH4(+) + NADPH + H(+). This is Glutamate dehydrogenase (gdhA) from Pyrococcus furiosus (strain ATCC 43587 / DSM 3638 / JCM 8422 / Vc1).